Consider the following 96-residue polypeptide: Glutamyl-tRNA(Gln) amidotransferase subunit C (96 aa).

The protein belongs to the GatC family. As to quaternary structure, heterotrimer of A, B and C subunits.

The enzyme catalyses L-glutamyl-tRNA(Gln) + L-glutamine + ATP + H2O = L-glutaminyl-tRNA(Gln) + L-glutamate + ADP + phosphate + H(+). The catalysed reaction is L-aspartyl-tRNA(Asn) + L-glutamine + ATP + H2O = L-asparaginyl-tRNA(Asn) + L-glutamate + ADP + phosphate + 2 H(+). Its function is as follows. Allows the formation of correctly charged Asn-tRNA(Asn) or Gln-tRNA(Gln) through the transamidation of misacylated Asp-tRNA(Asn) or Glu-tRNA(Gln) in organisms which lack either or both of asparaginyl-tRNA or glutaminyl-tRNA synthetases. The reaction takes place in the presence of glutamine and ATP through an activated phospho-Asp-tRNA(Asn) or phospho-Glu-tRNA(Gln). This Pseudomonas aeruginosa (strain ATCC 15692 / DSM 22644 / CIP 104116 / JCM 14847 / LMG 12228 / 1C / PRS 101 / PAO1) protein is Glutamyl-tRNA(Gln) amidotransferase subunit C.